Consider the following 530-residue polypeptide: RNA-binding protein 39 (530 aa).

The segment at 1-146 (MADDIDIEAM…PVREPIDNLT (146 aa)) is disordered. An N-acetylalanine modification is found at Ala-2. The span at 14 to 32 (PYKKDENKLSSANGHEERS) shows a compositional bias: basic and acidic residues. Composition is skewed to basic residues over residues 33–56 (KKRKKSKSRSRSHERKRSKSKERK) and 64–95 (KKSKSRERKRSRSKERRRSRSRSRDRRFRGRY). Position 95 is a phosphotyrosine (Tyr-95). Residues Ser-97 and Ser-100 each carry the phosphoserine modification. A Glycyl lysine isopeptide (Lys-Gly) (interchain with G-Cter in SUMO2) cross-link involves residue Lys-111. Ser-117 is modified (phosphoserine). Lys-119 is covalently cross-linked (Glycyl lysine isopeptide (Lys-Gly) (interchain with G-Cter in SUMO2)). The span at 119–130 (KLSRRRSRSKSP) shows a compositional bias: basic residues. Ser-121 and Ser-136 each carry phosphoserine. Over residues 131–146 (FRKDKSPVREPIDNLT) the composition is skewed to basic and acidic residues. Phosphothreonine is present on Thr-146. In terms of domain architecture, RRM 1 spans 153 to 230 (RTVFCMQLAA…VPIIVQASQA (78 aa)). A Glycyl lysine isopeptide (Lys-Gly) (interchain with G-Cter in SUMO2) cross-link involves residue Lys-244. Positions 250–328 (MRLYVGSLHF…RPMKVGHVTE (79 aa)) constitute an RRM 2 domain. An activating domain region spans residues 291–355 (KGYGFITFSD…RTGIDLGTTG (65 aa)). The tract at residues 291-406 (KGYGFITFSD…IDLQTRLSQQ (116 aa)) is interaction with JUN. Phosphoserine is present on residues Ser-334, Ser-337, and Ser-341. The tract at residues 355–406 (GRLQLMARLAEGTGLQIPPAAQQALQMSGSLAFGAVAEFSFVIDLQTRLSQQ) is interaction with ESR1 and ESR2. Residues 406-530 (QTEASALAAA…ATQLLVPSRR (125 aa)) form an interaction with NCOA6 region. The RRM 3 domain maps to 445 to 508 (EIKDDVIEEC…KMITAAYVPL (64 aa)).

This sequence belongs to the splicing factor SR family. In terms of assembly, interacts with NCOA6 and JUN. Interacts with ESR1 and ESR2, in the presence of estradiol (E2). Interacts with RSRC1 (via Arg/Ser-rich domain). Interacts with SF3B1. Interacts with ZNF106 (via N-terminus). Aryl sulfonamide anticancer drugs, such as indisulam (E7070) or E7820, promote ubiquitination and subsequent degradation by the DCX(DCAF15) complex. RBM39 degradation results in splicing defects and death in cancer cell lines. Aryl sulfonamide anticancer drugs change the substrate specificity of DCAF15 by acting as a molecular glue that promotes binding between DCAF15 and weak affinity interactor RBM39. As to expression, widely expressed. Highly expressed in pancreas, skeletal muscle, lung and brain. Expressed at intermediate level in kidney, liver and heart.

It is found in the nucleus speckle. RNA-binding protein that acts as a pre-mRNA splicing factor. Acts by promoting exon inclusion via regulation of exon cassette splicing. Also acts as a transcriptional coactivator for steroid nuclear receptors ESR1/ER-alpha and ESR2/ER-beta, and JUN/AP-1, independently of the pre-mRNA splicing factor activity. This chain is RNA-binding protein 39, found in Homo sapiens (Human).